Consider the following 676-residue polypeptide: Multisubstrate pseudouridine synthase 7 (676 aa).

2 disordered regions span residues Met-1–Leu-27 and Lys-87–Arg-110. Residue Ser-2 is modified to N-acetylserine. The span at Arg-94–Arg-110 shows a compositional bias: basic and acidic residues. The Nucleophile role is filled by Asp-256. The TRUD domain occupies Gly-338–Lys-582.

The protein belongs to the pseudouridine synthase TruD family.

The protein localises to the nucleus. Its subcellular location is the cytoplasm. The enzyme catalyses uridine in 5S rRNA = pseudouridine in 5S rRNA. It catalyses the reaction uridine in snRNA = pseudouridine in snRNA. It carries out the reaction uridine(13) in tRNA = pseudouridine(13) in tRNA. The catalysed reaction is a uridine in mRNA = a pseudouridine in mRNA. Functionally, catalyzes pseudouridylation at position 35 in U2 snRNA stem-loop II region which induces particular conformation of the mRNA-U2 snRNA duplex and places the nucleophile in an accessible position for the first step of splicing. Also catalyzes pseudouridylation at position 56 in U2 snRNA. Also catalyzes pseudouridylation at position 50 in 5S rRNA, position 13 in cytoplasmic tRNAs, and position 35 in pre-tRNA(Tyr). Pseudouridine residues in tRNAs may stabilize the local RNA conformation, favor interactions with protein partners and play an important role in the stabilization of the codon-anticodon interaction with mRNA. Also catalyzes pseudouridylation of mRNAs in response to heat shock: mediates pseudouridylation of mRNAs with the consensus sequence 5'-UGUAR-3'. In Saccharomyces cerevisiae (strain ATCC 204508 / S288c) (Baker's yeast), this protein is Multisubstrate pseudouridine synthase 7.